A 184-amino-acid chain; its full sequence is Protein GrpE (184 aa).

Positions 1-32 (MEEQKQTPSTPTPDTAAEAAVNAATAAPETAG) are disordered. Over residues 12-32 (TPDTAAEAAVNAATAAPETAG) the composition is skewed to low complexity.

The protein belongs to the GrpE family. In terms of assembly, homodimer.

It localises to the cytoplasm. Participates actively in the response to hyperosmotic and heat shock by preventing the aggregation of stress-denatured proteins, in association with DnaK and GrpE. It is the nucleotide exchange factor for DnaK and may function as a thermosensor. Unfolded proteins bind initially to DnaJ; upon interaction with the DnaJ-bound protein, DnaK hydrolyzes its bound ATP, resulting in the formation of a stable complex. GrpE releases ADP from DnaK; ATP binding to DnaK triggers the release of the substrate protein, thus completing the reaction cycle. Several rounds of ATP-dependent interactions between DnaJ, DnaK and GrpE are required for fully efficient folding. The polypeptide is Protein GrpE (Cupriavidus pinatubonensis (strain JMP 134 / LMG 1197) (Cupriavidus necator (strain JMP 134))).